A 78-amino-acid chain; its full sequence is RNA-binding protein KhpA (78 aa).

Residues 29–78 (TIIYELSVAKPDIGKIIGKEGRTIKAIRTLLVSVASRNNVRVSLEIMEEK) form the KH domain.

It belongs to the KhpA RNA-binding protein family.

Its subcellular location is the cytoplasm. A probable RNA-binding protein. This chain is RNA-binding protein KhpA, found in Chlamydia pneumoniae (Chlamydophila pneumoniae).